The primary structure comprises 220 residues: StAR-related lipid transfer protein 6 (220 aa).

Positions 1-208 (MDFKAIAQQT…AKDGIKAHRT (208 aa)) constitute an START domain.

Its function is as follows. May be involved in the intracellular transport of sterols or other lipids. May bind cholesterol or other sterols. This chain is StAR-related lipid transfer protein 6 (STARD6), found in Homo sapiens (Human).